The following is a 205-amino-acid chain: Methylthioribulose-1-phosphate dehydratase (205 aa).

The Zn(2+) site is built by His-96 and His-98.

This sequence belongs to the aldolase class II family. MtnB subfamily. The cofactor is Zn(2+).

The catalysed reaction is 5-(methylsulfanyl)-D-ribulose 1-phosphate = 5-methylsulfanyl-2,3-dioxopentyl phosphate + H2O. It functions in the pathway amino-acid biosynthesis; L-methionine biosynthesis via salvage pathway; L-methionine from S-methyl-5-thio-alpha-D-ribose 1-phosphate: step 2/6. Its function is as follows. Catalyzes the dehydration of methylthioribulose-1-phosphate (MTRu-1-P) into 2,3-diketo-5-methylthiopentyl-1-phosphate (DK-MTP-1-P). The protein is Methylthioribulose-1-phosphate dehydratase of Pseudomonas aeruginosa (strain UCBPP-PA14).